The following is an 875-amino-acid chain: cGMP-specific 3',5'-cyclic phosphodiesterase (875 aa).

Disordered stretches follow at residues 1–29 (MERA…DQDS) and 78–102 (SCSC…RKIS). A compositionally biased stretch (low complexity) spans 10 to 22 (QQRQQQQPQQQKQ). A compositionally biased stretch (polar residues) spans 78–101 (SCSCPLQQSPRADNSAPGTPTRKI). At serine 102 the chain carries Phosphoserine. 2 GAF domains span residues 164–314 (DVTA…GIVL) and 346–503 (SLEV…GLGI). The 325-residue stretch at 536-860 (ETRELQSLAA…QKWQALAEQQ (325 aa)) folds into the PDEase domain. Histidine 613 (proton donor) is an active-site residue. Residues histidine 617, histidine 653, aspartate 654, and aspartate 764 each coordinate Zn(2+). Aspartate 654 contributes to the Mg(2+) binding site. Position 817 (glutamine 817) interacts with 3',5'-cyclic GMP.

This sequence belongs to the cyclic nucleotide phosphodiesterase family. Zn(2+) is required as a cofactor. The cofactor is Mg(2+). Phosphorylation is regulated by binding of cGMP to the two allosteric sites. Phosphorylation by PRKG1 leads to its activation. As to expression, expressed in aortic smooth muscle cells, heart, placenta, skeletal muscle and pancreas and, to a much lesser extent, in brain, liver and lung.

It carries out the reaction 3',5'-cyclic GMP + H2O = GMP + H(+). Its pathway is purine metabolism; 3',5'-cyclic GMP degradation; GMP from 3',5'-cyclic GMP: step 1/1. With respect to regulation, sildenafil (Viagra) is a highly selective and potent inhibitor of PDE5A and is effective in the treatment of penile erectile dysfunction. Also inhibited by zaprinast. Plays a role in signal transduction by regulating the intracellular concentration of cyclic nucleotides. This phosphodiesterase catalyzes the specific hydrolysis of cGMP to 5'-GMP. Specifically regulates nitric-oxide-generated cGMP. The sequence is that of cGMP-specific 3',5'-cyclic phosphodiesterase from Homo sapiens (Human).